The sequence spans 121 residues: uncharacterized protein (121 aa).

77 to 84 (AALSFGKT) is an ATP binding site.

This is an uncharacterized protein from Saccharomyces cerevisiae (strain ATCC 204508 / S288c) (Baker's yeast).